A 337-amino-acid chain; its full sequence is Glyceraldehyde-3-phosphate dehydrogenase 1 (337 aa).

NAD(+) is bound by residues 12 to 13 (RI), Asp-34, and Arg-79. Residues 150 to 152 (SCT), Thr-181, 210 to 211 (TG), and Arg-233 each bind D-glyceraldehyde 3-phosphate. Cys-151 acts as the Nucleophile in catalysis. An NAD(+)-binding site is contributed by Asn-315.

The protein belongs to the glyceraldehyde-3-phosphate dehydrogenase family. As to quaternary structure, homotetramer.

It is found in the cytoplasm. The catalysed reaction is D-glyceraldehyde 3-phosphate + phosphate + NAD(+) = (2R)-3-phospho-glyceroyl phosphate + NADH + H(+). It functions in the pathway carbohydrate degradation; glycolysis; pyruvate from D-glyceraldehyde 3-phosphate: step 1/5. This is Glyceraldehyde-3-phosphate dehydrogenase 1 (GPD1) from Mucor circinelloides f. lusitanicus (Mucor racemosus var. lusitanicus).